The sequence spans 3434 residues: Genome polyprotein (3434 aa).

The Cytoplasmic portion of the chain corresponds to Met-1–Asn-106. Positions Ser-2–Asn-15 are interaction with host EXOC1. The segment at Leu-37–Ile-72 is hydrophobic; homodimerization of capsid protein C. Positions Gly-105–Ser-126 are cleaved as a propeptide — ER anchor for the capsid protein C, removed in mature form by serine protease NS3. Residues Asn-107–Ser-126 traverse the membrane as a helical segment. At Leu-127–Met-248 the chain is on the extracellular side. Asn-141 carries an N-linked (GlcNAc...) asparagine; by host glycan. Residues Lys-249–Ser-273 traverse the membrane as a helical segment. At Asn-274–Arg-278 the chain is on the cytoplasmic side. The helical transmembrane segment at Val-279–Ser-293 threads the bilayer. Topologically, residues Phe-294–Leu-745 are extracellular. Disulfide bonds link Cys-296–Cys-323, Cys-353–Cys-409, Cys-353–Cys-414, Cys-367–Cys-398, Cys-385–Cys-409, Cys-385–Cys-414, Cys-483–Cys-580, and Cys-597–Cys-628. The tract at residues Asp-391–Gly-404 is fusion peptide. A helical membrane pass occupies residues Phe-746–Val-766. Topologically, residues Asn-767–Ser-772 are cytoplasmic. A helical transmembrane segment spans residues Ile-773 to Ala-793. Topologically, residues Asp-794–Asp-1218 are extracellular. 2 cysteine pairs are disulfide-bonded: Cys-797/Cys-808 and Cys-848/Cys-936. Residues Asn-923, Asn-968, and Asn-1000 are each glycosylated (N-linked (GlcNAc...) asparagine; by host). 6 cysteine pairs are disulfide-bonded: Cys-972–Cys-1016, Cys-1073–Cys-1122, Cys-1084–Cys-1105, Cys-1084–Cys-1106, Cys-1105–Cys-1109, and Cys-1106–Cys-1109. The helical transmembrane segment at Val-1219–Phe-1239 threads the bilayer. The Cytoplasmic portion of the chain corresponds to Leu-1240 to Asn-1249. The helical transmembrane segment at Ile-1250 to Leu-1270 threads the bilayer. Residues Pro-1271–Ala-1286 lie on the Lumenal side of the membrane. Residues Ala-1287 to Met-1307 form a helical membrane-spanning segment. Residue Arg-1308 is a topological domain, cytoplasmic. A helical transmembrane segment spans residues Leu-1309–Gly-1329. Residues Glu-1330–Gly-1340 are Lumenal-facing. Residues Ala-1341–Ala-1361 traverse the membrane as a helical segment. Topologically, residues Gly-1362–Gly-1373 are cytoplasmic. The chain crosses the membrane as a helical span at residues Trp-1374–Ala-1394. The Lumenal segment spans residues Glu-1395–Asp-1397. A helical transmembrane segment spans residues Val-1398 to Ser-1418. The Cytoplasmic portion of the chain corresponds to Gly-1419–Thr-1475. The interval Leu-1426 to Val-1465 is interacts with and activates NS3 protease. The helical intramembrane region spans Ala-1476–Leu-1496. Topologically, residues Thr-1497 to Leu-2173 are cytoplasmic. In terms of domain architecture, Peptidase S7 spans Gly-1504–Ala-1681. Residues His-1554, Asp-1578, and Ser-1638 each act as charge relay system; for serine protease NS3 activity in the active site. The region spanning Ala-1684–Gln-1840 is the Helicase ATP-binding domain. The segment at Arg-1688 to Gln-1691 is important for RNA-binding. Leu-1697–Thr-1704 is a binding site for ATP. The DEAH box signature appears at Asp-1788 to His-1791. Positions Gly-1851 to Glu-2016 constitute a Helicase C-terminal domain. The residue at position 1892 (Lys-1892) is an N6-acetyllysine; by host. Positions Ala-1956–Gly-1980 are disordered. Residues Glu-2167–Asp-2171 form a regulates the ATPase activity of NS3 helicase region. A helical membrane pass occupies residues Glu-2174–Val-2194. Over Gln-2195–Gly-2198 the chain is Lumenal. The helical intramembrane region spans Ile-2199–Ala-2219. Position 2220 (Asp-2220) is a topological domain, lumenal. A helical membrane pass occupies residues Val-2221–Ile-2241. Residues Pro-2242 to Ala-2256 are Cytoplasmic-facing. The chain crosses the membrane as a helical span at residues Val-2257–Leu-2277. Over Glu-2278–Ala-2313 the chain is Lumenal. An intramembrane region (helical) is located at residues Thr-2314–Val-2334. Residues Thr-2335–Thr-2368 lie on the Lumenal side of the membrane. The helical transmembrane segment at Val-2369–Ala-2389 threads the bilayer. Topologically, residues Ala-2390 to Lys-2446 are cytoplasmic. The helical transmembrane segment at Val-2447–Thr-2467 threads the bilayer. Over Thr-2468 to Glu-2471 the chain is Lumenal. The helical transmembrane segment at Ala-2472 to Trp-2492 threads the bilayer. Over Asn-2493–Leu-3434 the chain is Cytoplasmic. Positions Gly-2530–Ala-2795 constitute an mRNA cap 0-1 NS5-type MT domain. The disordered stretch occupies residues Ser-2567 to Gly-2587. Residue Ser-2585 coordinates S-adenosyl-L-methionine. A Phosphoserine modification is found at Ser-2585. Lys-2590 functions as the For 2'-O-MTase activity in the catalytic mechanism. Positions 2615, 2616, 2633, 2634, 2660, and 2661 each coordinate S-adenosyl-L-methionine. The active-site For 2'-O-MTase activity is the Asp-2675. Residue Ile-2676 participates in S-adenosyl-L-methionine binding. Active-site for 2'-O-MTase activity residues include Lys-2711 and Glu-2747. Tyr-2749 provides a ligand contact to S-adenosyl-L-methionine. 4 residues coordinate Zn(2+): Glu-2969, His-2973, Cys-2978, and Cys-2981. Residues Gly-3059–Ala-3211 form the RdRp catalytic domain. His-3246, Cys-3262, and Cys-3381 together coordinate Zn(2+).

The protein in the N-terminal section; belongs to the class I-like SAM-binding methyltransferase superfamily. mRNA cap 0-1 NS5-type methyltransferase family. Homodimer. Interacts (via N-terminus) with host EXOC1 (via C-terminus); this interaction results in EXOC1 degradation through the proteasome degradation pathway. As to quaternary structure, forms heterodimers with envelope protein E in the endoplasmic reticulum and Golgi. In terms of assembly, homodimer; in the endoplasmic reticulum and Golgi. Interacts with protein prM. Interacts with non-structural protein 1. Homodimer; Homohexamer when secreted. Interacts with envelope protein E. NS1 interacts with NS4B. Interacts with host complement protein CFH; this interaction leads to the degradation of C3. As to quaternary structure, interacts (via N-terminus) with serine protease NS3. In terms of assembly, forms a heterodimer with serine protease NS3. May form homooligomers. Forms a heterodimer with NS2B. Interacts with non-structural protein 2A (via N-terminus). Interacts with NS4B. Interacts with unphosphorylated RNA-directed RNA polymerase NS5; this interaction stimulates RNA-directed RNA polymerase NS5 guanylyltransferase activity. As to quaternary structure, interacts with serine protease NS3. In terms of assembly, homodimer. Interacts with host STAT2; this interaction inhibits the phosphorylation of the latter, and, when all viral proteins are present (polyprotein), targets STAT2 for degradation. Interacts with serine protease NS3. Post-translationally, specific enzymatic cleavages in vivo yield mature proteins. Cleavages in the lumen of endoplasmic reticulum are performed by host signal peptidase, whereas cleavages in the cytoplasmic side are performed by serine protease NS3. Signal cleavage at the 2K-4B site requires a prior NS3 protease-mediated cleavage at the 4A-2K site. Cleaved in post-Golgi vesicles by a host furin, releasing the mature small envelope protein M, and peptide pr. This cleavage is incomplete as up to 30% of viral particles still carry uncleaved prM. In terms of processing, N-glycosylated. Post-translationally, N-glycosylated. The excreted form is glycosylated and this is required for efficient secretion of the protein from infected cells. Acetylated by host KAT5. Acetylation modulates NS3 RNA-binding and unwinding activities and plays an important positive role for viral replication. In terms of processing, phosphorylated on serines residues. This phosphorylation may trigger NS5 nuclear localization.

The protein localises to the virion. The protein resides in the host nucleus. Its subcellular location is the host cytoplasm. It is found in the host perinuclear region. It localises to the secreted. The protein localises to the virion membrane. The protein resides in the host endoplasmic reticulum membrane. It carries out the reaction Selective hydrolysis of -Xaa-Xaa-|-Yaa- bonds in which each of the Xaa can be either Arg or Lys and Yaa can be either Ser or Ala.. It catalyses the reaction RNA(n) + a ribonucleoside 5'-triphosphate = RNA(n+1) + diphosphate. The enzyme catalyses a ribonucleoside 5'-triphosphate + H2O = a ribonucleoside 5'-diphosphate + phosphate + H(+). The catalysed reaction is ATP + H2O = ADP + phosphate + H(+). It carries out the reaction a 5'-end (5'-triphosphoguanosine)-ribonucleoside in mRNA + S-adenosyl-L-methionine = a 5'-end (N(7)-methyl 5'-triphosphoguanosine)-ribonucleoside in mRNA + S-adenosyl-L-homocysteine. It catalyses the reaction a 5'-end (N(7)-methyl 5'-triphosphoguanosine)-ribonucleoside in mRNA + S-adenosyl-L-methionine = a 5'-end (N(7)-methyl 5'-triphosphoguanosine)-(2'-O-methyl-ribonucleoside) in mRNA + S-adenosyl-L-homocysteine + H(+). Its function is as follows. Plays a role in virus budding by binding to the cell membrane and gathering the viral RNA into a nucleocapsid that forms the core of a mature virus particle. During virus entry, may induce genome penetration into the host cytoplasm after hemifusion induced by the surface proteins. Can migrate to the cell nucleus where it modulates host functions. Overcomes the anti-viral effects of host EXOC1 by sequestering and degrading the latter through the proteasome degradation pathway. Functionally, inhibits RNA silencing by interfering with host Dicer. Prevents premature fusion activity of envelope proteins in trans-Golgi by binding to envelope protein E at pH6.0. After virion release in extracellular space, gets dissociated from E dimers. In terms of biological role, acts as a chaperone for envelope protein E during intracellular virion assembly by masking and inactivating envelope protein E fusion peptide. prM is the only viral peptide matured by host furin in the trans-Golgi network probably to avoid catastrophic activation of the viral fusion activity in acidic Golgi compartment prior to virion release. prM-E cleavage is inefficient, and many virions are only partially matured. These uncleaved prM would play a role in immune evasion. Its function is as follows. May play a role in virus budding. Exerts cytotoxic effects by activating a mitochondrial apoptotic pathway through M ectodomain. May display a viroporin activity. Functionally, binds to host cell surface receptor and mediates fusion between viral and cellular membranes. Envelope protein is synthesized in the endoplasmic reticulum in the form of heterodimer with protein prM. They play a role in virion budding in the ER, and the newly formed immature particle is covered with 60 spikes composed of heterodimer between precursor prM and envelope protein E. The virion is transported to the Golgi apparatus where the low pH causes dissociation of PrM-E heterodimers and formation of E homodimers. prM-E cleavage is inefficient, and many virions are only partially matured. These uncleaved prM would play a role in immune evasion. Involved in immune evasion, pathogenesis and viral replication. Once cleaved off the polyprotein, is targeted to three destinations: the viral replication cycle, the plasma membrane and the extracellular compartment. Essential for viral replication. Required for formation of the replication complex and recruitment of other non-structural proteins to the ER-derived membrane structures. Excreted as a hexameric lipoparticle that plays a role against host immune response. Antagonizing the complement function. Binds to the host macrophages and dendritic cells. Inhibits signal transduction originating from Toll-like receptor 3 (TLR3). In terms of biological role, component of the viral RNA replication complex that functions in virion assembly and antagonizes the host alpha/beta interferon antiviral response. Its function is as follows. Required cofactor for the serine protease function of NS3. May have membrane-destabilizing activity and form viroporins. Functionally, displays three enzymatic activities: serine protease, NTPase and RNA helicase. NS3 serine protease, in association with NS2B, performs its autocleavage and cleaves the polyprotein at dibasic sites in the cytoplasm: C-prM, NS2A-NS2B, NS2B-NS3, NS3-NS4A, NS4A-2K and NS4B-NS5. NS3 RNA helicase binds RNA and unwinds dsRNA in the 3' to 5' direction. Regulates the ATPase activity of the NS3 helicase activity. NS4A allows NS3 helicase to conserve energy during unwinding. In terms of biological role, functions as a signal peptide for NS4B and is required for the interferon antagonism activity of the latter. Its function is as follows. Induces the formation of ER-derived membrane vesicles where the viral replication takes place. Inhibits interferon (IFN)-induced host STAT1 phosphorylation and nuclear translocation, thereby preventing the establishment of cellular antiviral state by blocking the IFN-alpha/beta pathway. Inhibits STAT2 translocation in the nucleus after IFN-alpha treatment. Functionally, replicates the viral (+) and (-) RNA genome, and performs the capping of genomes in the cytoplasm. NS5 methylates viral RNA cap at guanine N-7 and ribose 2'-O positions. Besides its role in RNA genome replication, also prevents the establishment of cellular antiviral state by blocking the interferon-alpha/beta (IFN-alpha/beta) signaling pathway. Inhibits host TYK2 and STAT2 phosphorylation, thereby preventing activation of JAK-STAT signaling pathway. In Usutu virus (USUV), this protein is Genome polyprotein.